The primary structure comprises 279 residues: Oxygen-dependent coproporphyrinogen-III oxidase (279 aa).

Residue Ser102 coordinates substrate. 2 residues coordinate a divalent metal cation: His106 and His116. The active-site Proton donor is the His116. 118–120 lines the substrate pocket; sequence NTR. Residues His149 and His179 each contribute to the a divalent metal cation site. Residues 244-279 are important for dimerization; it reads YVEFNLLYDRGTKFGLMTDGNVEAILMSLPPEVKWA.

It belongs to the aerobic coproporphyrinogen-III oxidase family. Homodimer. Requires a divalent metal cation as cofactor.

The protein localises to the cytoplasm. The enzyme catalyses coproporphyrinogen III + O2 + 2 H(+) = protoporphyrinogen IX + 2 CO2 + 2 H2O. It participates in porphyrin-containing compound metabolism; protoporphyrin-IX biosynthesis; protoporphyrinogen-IX from coproporphyrinogen-III (O2 route): step 1/1. Involved in the heme biosynthesis. Catalyzes the aerobic oxidative decarboxylation of propionate groups of rings A and B of coproporphyrinogen-III to yield the vinyl groups in protoporphyrinogen-IX. In Rickettsia bellii (strain RML369-C), this protein is Oxygen-dependent coproporphyrinogen-III oxidase.